The sequence spans 299 residues: Ribosomal RNA small subunit methyltransferase H (299 aa).

Residues Ala-32–His-34, Asp-52, Phe-79, Asp-100, and Gln-107 contribute to the S-adenosyl-L-methionine site.

The protein belongs to the methyltransferase superfamily. RsmH family.

It localises to the cytoplasm. It catalyses the reaction cytidine(1402) in 16S rRNA + S-adenosyl-L-methionine = N(4)-methylcytidine(1402) in 16S rRNA + S-adenosyl-L-homocysteine + H(+). Functionally, specifically methylates the N4 position of cytidine in position 1402 (C1402) of 16S rRNA. The protein is Ribosomal RNA small subunit methyltransferase H of Mycoplasmopsis pulmonis (strain UAB CTIP) (Mycoplasma pulmonis).